A 241-amino-acid chain; its full sequence is Orotidine 5'-phosphate decarboxylase (241 aa).

Residues D15, K36, 63–72 (DLKFHDIPNT), T127, R189, Q198, G218, and R219 contribute to the substrate site. The active-site Proton donor is K65.

The protein belongs to the OMP decarboxylase family. Type 1 subfamily. Homodimer.

It catalyses the reaction orotidine 5'-phosphate + H(+) = UMP + CO2. It functions in the pathway pyrimidine metabolism; UMP biosynthesis via de novo pathway; UMP from orotate: step 2/2. In terms of biological role, catalyzes the decarboxylation of orotidine 5'-monophosphate (OMP) to uridine 5'-monophosphate (UMP). This Prochlorococcus marinus (strain MIT 9211) protein is Orotidine 5'-phosphate decarboxylase.